A 324-amino-acid chain; its full sequence is MGDTIKELLNPTVLSALLMGFAFSMVLGPIFIPMLHKLKFGQNIRTDGPKSHLKKSGTPTMGGLIFFISVSVTMLIIEYKPTDEGMIVLYSLIAFGIIGFLDDILKIIHRDNLGLRAYQKMILLLLFSIALAYYGYTNIGTDIIIPFMNSKLNLGIFYIPLVVVYYAATTNAVNLTDGIDGLASSVTVIVLTFFAIVGFKTGHYQVGVFSIALAGALLGFLRYNAFPAKIFMGDTGSLALGGAIATIALILKMPLFIIIVGGIYVVETLSVIIQVTSFKTTGKRVFKMAPIHHHFEQCGWSEVKLVTVFSIITLILCIIGFIAL.

Helical transmembrane passes span 13–33 (VLSA…IFIP), 57–77 (GTPT…MLII), 85–105 (GMIV…DDIL), 121–141 (MILL…NIGT), 143–163 (IIIP…PLVV), 179–199 (IDGL…IVGF), 201–221 (TGHY…LGFL), 238–260 (LALG…IIIV), and 303–323 (VKLV…GFIA).

Belongs to the glycosyltransferase 4 family. MraY subfamily. It depends on Mg(2+) as a cofactor.

It localises to the cell membrane. The catalysed reaction is UDP-N-acetyl-alpha-D-muramoyl-L-alanyl-gamma-D-glutamyl-meso-2,6-diaminopimeloyl-D-alanyl-D-alanine + di-trans,octa-cis-undecaprenyl phosphate = di-trans,octa-cis-undecaprenyl diphospho-N-acetyl-alpha-D-muramoyl-L-alanyl-D-glutamyl-meso-2,6-diaminopimeloyl-D-alanyl-D-alanine + UMP. It functions in the pathway cell wall biogenesis; peptidoglycan biosynthesis. Its function is as follows. Catalyzes the initial step of the lipid cycle reactions in the biosynthesis of the cell wall peptidoglycan: transfers peptidoglycan precursor phospho-MurNAc-pentapeptide from UDP-MurNAc-pentapeptide onto the lipid carrier undecaprenyl phosphate, yielding undecaprenyl-pyrophosphoryl-MurNAc-pentapeptide, known as lipid I. This is Phospho-N-acetylmuramoyl-pentapeptide-transferase from Clostridium botulinum (strain Eklund 17B / Type B).